A 414-amino-acid polypeptide reads, in one-letter code: Lipoyl synthase, mitochondrial (414 aa).

Residues 1–31 (MAVSTSHFRSLCASRPLSRTAIVGHISCRSY) constitute a mitochondrion transit peptide. Positions 31–51 (YATTEPSPSATSTSTTTTARR) are disordered. Positions 32–48 (ATTEPSPSATSTSTTTT) are enriched in low complexity. Positions 131, 136, 142, 162, 166, 169, and 377 each coordinate [4Fe-4S] cluster. Residues 145 to 366 (GSDKSAATAT…RQRALDMGFL (222 aa)) enclose the Radical SAM core domain.

The protein belongs to the radical SAM superfamily. Lipoyl synthase family. The cofactor is [4Fe-4S] cluster.

It is found in the mitochondrion. It catalyses the reaction [[Fe-S] cluster scaffold protein carrying a second [4Fe-4S](2+) cluster] + N(6)-octanoyl-L-lysyl-[protein] + 2 oxidized [2Fe-2S]-[ferredoxin] + 2 S-adenosyl-L-methionine + 4 H(+) = [[Fe-S] cluster scaffold protein] + N(6)-[(R)-dihydrolipoyl]-L-lysyl-[protein] + 4 Fe(3+) + 2 hydrogen sulfide + 2 5'-deoxyadenosine + 2 L-methionine + 2 reduced [2Fe-2S]-[ferredoxin]. Its pathway is protein modification; protein lipoylation via endogenous pathway; protein N(6)-(lipoyl)lysine from octanoyl-[acyl-carrier-protein]: step 2/2. Its function is as follows. Catalyzes the radical-mediated insertion of two sulfur atoms into the C-6 and C-8 positions of the octanoyl moiety bound to the lipoyl domains of lipoate-dependent enzymes, thereby converting the octanoylated domains into lipoylated derivatives. The chain is Lipoyl synthase, mitochondrial from Aspergillus fumigatus (strain CBS 144.89 / FGSC A1163 / CEA10) (Neosartorya fumigata).